We begin with the raw amino-acid sequence, 231 residues long: Large ribosomal subunit protein uL1 (231 aa).

The protein belongs to the universal ribosomal protein uL1 family. Part of the 50S ribosomal subunit.

Binds directly to 23S rRNA. The L1 stalk is quite mobile in the ribosome, and is involved in E site tRNA release. Functionally, protein L1 is also a translational repressor protein, it controls the translation of the L11 operon by binding to its mRNA. In Gluconacetobacter diazotrophicus (strain ATCC 49037 / DSM 5601 / CCUG 37298 / CIP 103539 / LMG 7603 / PAl5), this protein is Large ribosomal subunit protein uL1.